Reading from the N-terminus, the 767-residue chain is DNA topoisomerase 1 (767 aa).

The span at 1–23 (MSGDHLHNDSQIEADFRLNDSHK) shows a compositional bias: basic and acidic residues. Residues 1-201 (MSGDHLHNDS…NKKKKPKKEE (201 aa)) are disordered. N-acetylserine is present on Ser-2. Residues Ser-2 and Ser-10 each carry the phosphoserine modification. Residues 24–39 (HKDKHKDREHRHKEHK) are compositionally biased toward basic residues. Basic and acidic residues predominate over residues 40 to 110 (KDKEKDREKS…DAKIKKEKEN (71 aa)). Ser-59 is modified (phosphoserine). Lys-103 participates in a covalent cross-link: Glycyl lysine isopeptide (Lys-Gly) (interchain with G-Cter in SUMO2). Lys-105 participates in a covalent cross-link: Glycyl lysine isopeptide (Lys-Gly) (interchain with G-Cter in SUMO); alternate. Lys-105 participates in a covalent cross-link: Glycyl lysine isopeptide (Lys-Gly) (interchain with G-Cter in SUMO2); alternate. Ser-114 carries the post-translational modification Phosphoserine. Lys-119 is covalently cross-linked (Glycyl lysine isopeptide (Lys-Gly) (interchain with G-Cter in SUMO); alternate). Residue Lys-119 forms a Glycyl lysine isopeptide (Lys-Gly) (interchain with G-Cter in SUMO2); alternate linkage. A Glycyl lysine isopeptide (Lys-Gly) (interchain with G-Cter in SUMO1); alternate cross-link involves residue Lys-119. The span at 131–168 (PKEDIKPLKRPRDEDDADYKPKKIKTEDIKKEKKRKLE) shows a compositional bias: basic and acidic residues. Glycyl lysine isopeptide (Lys-Gly) (interchain with G-Cter in SUMO2) cross-links involve residues Lys-136 and Lys-150. A Glycyl lysine isopeptide (Lys-Gly) (interchain with G-Cter in SUMO); alternate cross-link involves residue Lys-155. Residue Lys-155 forms a Glycyl lysine isopeptide (Lys-Gly) (interchain with G-Cter in SUMO2); alternate linkage. Glycyl lysine isopeptide (Lys-Gly) (interchain with G-Cter in SUMO2) cross-links involve residues Lys-160 and Lys-166. A Glycyl lysine isopeptide (Lys-Gly) (interchain with G-Cter in SUMO2); alternate cross-link involves residue Lys-174. Position 174 is an N6-acetyllysine; alternate (Lys-174). The span at 181-201 (KDKDKKVPEPDNKKKKPKKEE) shows a compositional bias: basic and acidic residues. Lys-206 is covalently cross-linked (Glycyl lysine isopeptide (Lys-Gly) (interchain with G-Cter in SUMO2)). Lys-282 carries the post-translational modification N6-acetyllysine. Lys-338 is covalently cross-linked (Glycyl lysine isopeptide (Lys-Gly) (interchain with G-Cter in SUMO2)). 2 interaction with DNA regions span residues 427 to 428 (KY) and 490 to 495 (RAGNEK). Positions 434–767 (SSRIKGEKDW…IDMADEDYEF (334 aa)) constitute a Topo IB-type catalytic domain. Ser-508 carries the phosphoserine; by CK2 modification. A Glycyl lysine isopeptide (Lys-Gly) (interchain with G-Cter in SUMO2) cross-link involves residue Lys-551. Residues 587–589 (TAK) are interaction with DNA. Glycyl lysine isopeptide (Lys-Gly) (interchain with G-Cter in SUMO2) cross-links involve residues Lys-644, Lys-702, and Lys-714. Residue Tyr-725 is the O-(3'-phospho-DNA)-tyrosine intermediate of the active site.

Belongs to the type IB topoisomerase family. Monomer. Interacts with ERCC6. Interacts with TPRN; TPRN interacts with a number of DNA damage response proteins, is recruited to sites of DNA damage and may play a role in DNA damage repair. Post-translationally, sumoylated. Lys-119 is the main site of sumoylation. Sumoylation plays a role in partitioning TOP1 between nucleoli and nucleoplasm. Levels are dramatically increased on camptothecin (CPT) treatment. Phosphorylation at Ser-508 by CK2 increases binding to supercoiled DNA and sensitivity to camptothecin.

It localises to the nucleus. The protein resides in the nucleolus. It is found in the nucleoplasm. It catalyses the reaction ATP-independent breakage of single-stranded DNA, followed by passage and rejoining.. Specifically inhibited by camptothecin (CPT), a plant alkaloid with antitumor activity. Functionally, releases the supercoiling and torsional tension of DNA introduced during the DNA replication and transcription by transiently cleaving and rejoining one strand of the DNA duplex. Introduces a single-strand break via transesterification at a target site in duplex DNA. The scissile phosphodiester is attacked by the catalytic tyrosine of the enzyme, resulting in the formation of a DNA-(3'-phosphotyrosyl)-enzyme intermediate and the expulsion of a 5'-OH DNA strand. The free DNA strand then rotates around the intact phosphodiester bond on the opposing strand, thus removing DNA supercoils. Finally, in the religation step, the DNA 5'-OH attacks the covalent intermediate to expel the active-site tyrosine and restore the DNA phosphodiester backbone. Regulates the alternative splicing of tissue factor (F3) pre-mRNA in endothelial cells. Involved in the circadian transcription of the core circadian clock component BMAL1 by altering the chromatin structure around the ROR response elements (ROREs) on the BMAL1 promoter. The protein is DNA topoisomerase 1 (TOP1) of Chlorocebus aethiops (Green monkey).